A 339-amino-acid chain; its full sequence is tRNA-specific 2-thiouridylase MnmA (339 aa).

Residues 6-13 (AMSGGVDS) and M32 contribute to the ATP site. C92 (nucleophile) is an active-site residue. C92 and C186 are joined by a disulfide. G116 serves as a coordination point for ATP. The interaction with tRNA stretch occupies residues 134–136 (KDQ). The active-site Cysteine persulfide intermediate is C186. The interval 288–289 (RY) is interaction with tRNA.

Belongs to the MnmA/TRMU family.

The protein localises to the cytoplasm. The enzyme catalyses S-sulfanyl-L-cysteinyl-[protein] + uridine(34) in tRNA + AH2 + ATP = 2-thiouridine(34) in tRNA + L-cysteinyl-[protein] + A + AMP + diphosphate + H(+). Catalyzes the 2-thiolation of uridine at the wobble position (U34) of tRNA, leading to the formation of s(2)U34. In Campylobacter curvus (strain 525.92), this protein is tRNA-specific 2-thiouridylase MnmA.